Consider the following 150-residue polypeptide: Large ribosomal subunit protein bL9 (150 aa).

This sequence belongs to the bacterial ribosomal protein bL9 family.

Binds to the 23S rRNA. The chain is Large ribosomal subunit protein bL9 from Burkholderia multivorans (strain ATCC 17616 / 249).